The chain runs to 20 residues: Small ribosomal subunit protein bS20 (20 aa).

Residues 1–20 (ANNPGARKAIRKIEARTEVN) form a disordered region. Over residues 11–20 (RKIEARTEVN) the composition is skewed to basic and acidic residues.

It belongs to the bacterial ribosomal protein bS20 family.

Functionally, binds directly to 16S ribosomal RNA. The sequence is that of Small ribosomal subunit protein bS20 (rpsT) from Brevundimonas vesicularis (Pseudomonas vesicularis).